Reading from the N-terminus, the 615-residue chain is Elongation factor 4 (615 aa).

Positions 14 to 200 (ARIRNFCIIA…KVVELIPAPT (187 aa)) constitute a tr-type G domain. GTP-binding positions include 26–31 (DHGKST) and 147–150 (NKID).

It belongs to the TRAFAC class translation factor GTPase superfamily. Classic translation factor GTPase family. LepA subfamily.

The protein resides in the cell membrane. It carries out the reaction GTP + H2O = GDP + phosphate + H(+). Functionally, required for accurate and efficient protein synthesis under certain stress conditions. May act as a fidelity factor of the translation reaction, by catalyzing a one-codon backward translocation of tRNAs on improperly translocated ribosomes. Back-translocation proceeds from a post-translocation (POST) complex to a pre-translocation (PRE) complex, thus giving elongation factor G a second chance to translocate the tRNAs correctly. Binds to ribosomes in a GTP-dependent manner. The protein is Elongation factor 4 of Corynebacterium glutamicum (strain ATCC 13032 / DSM 20300 / JCM 1318 / BCRC 11384 / CCUG 27702 / LMG 3730 / NBRC 12168 / NCIMB 10025 / NRRL B-2784 / 534).